The primary structure comprises 206 residues: Ribosomal RNA small subunit methyltransferase G (206 aa).

S-adenosyl-L-methionine-binding positions include Gly-74, Leu-79, 125 to 126 (VE), and Arg-140.

The protein belongs to the methyltransferase superfamily. RNA methyltransferase RsmG family.

It localises to the cytoplasm. It catalyses the reaction guanosine(527) in 16S rRNA + S-adenosyl-L-methionine = N(7)-methylguanosine(527) in 16S rRNA + S-adenosyl-L-homocysteine. Functionally, specifically methylates the N7 position of guanine in position 527 of 16S rRNA. The protein is Ribosomal RNA small subunit methyltransferase G of Shewanella putrefaciens (strain CN-32 / ATCC BAA-453).